A 323-amino-acid chain; its full sequence is uncharacterized protein (323 aa).

Belongs to the glycosyltransferase 2 family.

This is an uncharacterized protein from Haemophilus influenzae (strain ATCC 51907 / DSM 11121 / KW20 / Rd).